The sequence spans 180 residues: MTRKSIAIDMDEVLADTLGEIIDAVNFRADLGIKMEALNGQKLKHVIPEHDGLITEVLREPGFFRHLKVMPHAQEVVKKLTEHYDVYIATAAMDVPTSFSDKYEWLLEFFPFLDPQHFVFCGRKNIVKADYLIDDNPRQLEIFTGTPIMFTAVHNINDDRFERVNSWKDVEQYFLDNIEK.

Asp-9 serves as the catalytic Nucleophile. Positions 9, 11, and 135 each coordinate Mg(2+). The Proton donor role is filled by Asp-11.

Belongs to the 5'(3')-deoxyribonucleotidase family. The cofactor is Mg(2+).

Dephosphorylates the 5' and 2'(3')-phosphates of deoxyribonucleotides. The sequence is that of Putative 5'(3')-deoxyribonucleotidase from Staphylococcus aureus (strain Mu50 / ATCC 700699).